A 309-amino-acid polypeptide reads, in one-letter code: MTTKKADYIWFNGEMVRWEDAKVHVMSHALHYGTSVFEGIRCYDSHKGPVVFRHREHMQRLHDSAKIYRFPVSQSIDELMEACRDVIRKNNLTSAYIRPLIFVGDVGMGVNPPAGYSTDVIIAAFPWGAYLGAEALEQGIDAMVSSWNRAAPNTIPTAAKAGGNYLSSLLVGSEARRHGYQEGIALDVNGYISEGAGENLFEVKDGVLFTPPFTSSALPGITRDAIIKLAKELGIEVREQVLSRESLYLADEVFMSGTAAEITPVRSVDGIQVGEGRCGPVTKRIQQAFFGLFTGETEDKWGWLDQVNQ.

Lysine 160 is subject to N6-(pyridoxal phosphate)lysine.

The protein belongs to the class-IV pyridoxal-phosphate-dependent aminotransferase family. In terms of assembly, homohexamer. It depends on pyridoxal 5'-phosphate as a cofactor.

It carries out the reaction L-leucine + 2-oxoglutarate = 4-methyl-2-oxopentanoate + L-glutamate. The enzyme catalyses L-isoleucine + 2-oxoglutarate = (S)-3-methyl-2-oxopentanoate + L-glutamate. The catalysed reaction is L-valine + 2-oxoglutarate = 3-methyl-2-oxobutanoate + L-glutamate. It functions in the pathway amino-acid biosynthesis; L-isoleucine biosynthesis; L-isoleucine from 2-oxobutanoate: step 4/4. Its pathway is amino-acid biosynthesis; L-leucine biosynthesis; L-leucine from 3-methyl-2-oxobutanoate: step 4/4. The protein operates within amino-acid biosynthesis; L-valine biosynthesis; L-valine from pyruvate: step 4/4. In terms of biological role, acts on leucine, isoleucine and valine. The protein is Branched-chain-amino-acid aminotransferase (ilvE) of Escherichia coli O157:H7.